Consider the following 168-residue polypeptide: Gremlin-2 (168 aa).

The first 21 residues, 1–21 (MFWKLSLTLLLVAVLVKVAET), serve as a signal peptide directing secretion. N-linked (GlcNAc...) asparagine glycosylation occurs at N40. 4 cysteine pairs are disulfide-bonded: C73-C123, C87-C137, C97-C155, and C101-C157. The region spanning 73–163 (CKTQPLRQTV…HCRCMSVNLS (91 aa)) is the CTCK domain. The N-linked (GlcNAc...) asparagine glycan is linked to N161.

It belongs to the DAN family. As to quaternary structure, homodimer. Interacts with BMP2, BMP4 and BMP7, but has lower affinity for BMP7 than for BMP2 and BMP4. Binds heparin; this impairs the interaction with BMP2. Post-translationally, N-glycosylated. As to expression, highly expressed in the ovary, followed by brain, spleen, colon, kidney and uterus. In ovary expressed in granulosa cells of selective early antral follicles.

It is found in the secreted. In terms of biological role, cytokine that inhibits the activity of BMP2 and BMP4 in a dose-dependent manner, and thereby modulates signaling by BMP family members. Contributes to the regulation of embryonic morphogenesis via BMP family members. Antagonizes BMP4-induced suppression of progesterone production in granulosa cells. This is Gremlin-2 (Grem2) from Mus musculus (Mouse).